We begin with the raw amino-acid sequence, 178 residues long: Interleukin-17B (178 aa).

The N-terminal stretch at methionine 1 to proline 22 is a signal peptide. The segment at glutamine 21–glutamine 44 is disordered. Asparagine 75 carries an N-linked (GlcNAc...) asparagine glycan. 2 disulfide bridges follow: cysteine 121–cysteine 176 and cysteine 126–cysteine 178.

It belongs to the IL-17 family.

The protein resides in the secreted. Functionally, stimulates the release of tumor necrosis factor alpha and IL-1-beta from the monocytic cell line THP-1. The polypeptide is Interleukin-17B (IL17B) (Mesocricetus auratus (Golden hamster)).